Consider the following 403-residue polypeptide: Large ribosomal subunit protein uL3 (403 aa).

The disordered stretch occupies residues Met1–Pro37. Ser13 is subject to Phosphoserine. Residues Pro18–Ser31 show a composition bias toward basic residues. Lys39 participates in a covalent cross-link: Glycyl lysine isopeptide (Lys-Gly) (interchain with G-Cter in SUMO2). Lys136 bears the N6-acetyllysine mark. Glycyl lysine isopeptide (Lys-Gly) (interchain with G-Cter in SUMO2) cross-links involve residues Lys224 and Lys226. His245 bears the Tele-methylhistidine mark. Lys286 and Lys294 each carry N6-acetyllysine; alternate. Lys286 participates in a covalent cross-link: Glycyl lysine isopeptide (Lys-Gly) (interchain with G-Cter in SUMO2); alternate. Lys294 participates in a covalent cross-link: Glycyl lysine isopeptide (Lys-Gly) (interchain with G-Cter in SUMO1); alternate. Position 304 is a phosphoserine (Ser304). Lys366 carries the N6-acetyllysine; alternate modification. A Glycyl lysine isopeptide (Lys-Gly) (interchain with G-Cter in SUMO2); alternate cross-link involves residue Lys366. Lys373 carries the post-translational modification N6-acetyllysine. Glycyl lysine isopeptide (Lys-Gly) (interchain with G-Cter in SUMO2) cross-links involve residues Lys386, Lys393, and Lys399.

It belongs to the universal ribosomal protein uL3 family. As to quaternary structure, component of the large ribosomal subunit. Interacts with DHX33. In terms of processing, constitutively monomethylated at His-245 by METTL18. Methylation at His-245 regulates translation elongation by slowing ribosome traversal on tyrosine codons: slower elongation provides enough time for proper folding of synthesized proteins and prevents cellular aggregation of tyrosine-rich proteins It is not required for incorporation of RPL3 into ribosomes.

It localises to the nucleus. The protein resides in the nucleolus. The protein localises to the cytoplasm. Its function is as follows. Component of the large ribosomal subunit. The ribosome is a large ribonucleoprotein complex responsible for the synthesis of proteins in the cell. The polypeptide is Large ribosomal subunit protein uL3 (RPL3) (Macaca fascicularis (Crab-eating macaque)).